Here is a 238-residue protein sequence, read N- to C-terminus: Ribonuclease PH (238 aa).

Phosphate is bound by residues R86 and 124 to 126; that span reads GTR.

It belongs to the RNase PH family. In terms of assembly, homohexameric ring arranged as a trimer of dimers.

The catalysed reaction is tRNA(n+1) + phosphate = tRNA(n) + a ribonucleoside 5'-diphosphate. In terms of biological role, phosphorolytic 3'-5' exoribonuclease that plays an important role in tRNA 3'-end maturation. Removes nucleotide residues following the 3'-CCA terminus of tRNAs; can also add nucleotides to the ends of RNA molecules by using nucleoside diphosphates as substrates, but this may not be physiologically important. Probably plays a role in initiation of 16S rRNA degradation (leading to ribosome degradation) during starvation. The polypeptide is Ribonuclease PH (Geobacter metallireducens (strain ATCC 53774 / DSM 7210 / GS-15)).